The chain runs to 233 residues: Small ribosomal subunit protein uS3 (233 aa).

In terms of domain architecture, KH type-2 spans 39–107 (VRQYLNKELA…PAQINIAEVR (69 aa)).

It belongs to the universal ribosomal protein uS3 family. As to quaternary structure, part of the 30S ribosomal subunit. Forms a tight complex with proteins S10 and S14.

In terms of biological role, binds the lower part of the 30S subunit head. Binds mRNA in the 70S ribosome, positioning it for translation. This is Small ribosomal subunit protein uS3 from Cronobacter sakazakii (strain ATCC BAA-894) (Enterobacter sakazakii).